The following is a 571-amino-acid chain: Proline--tRNA ligase (571 aa).

The protein belongs to the class-II aminoacyl-tRNA synthetase family. ProS type 1 subfamily. Homodimer.

It is found in the cytoplasm. The catalysed reaction is tRNA(Pro) + L-proline + ATP = L-prolyl-tRNA(Pro) + AMP + diphosphate. In terms of biological role, catalyzes the attachment of proline to tRNA(Pro) in a two-step reaction: proline is first activated by ATP to form Pro-AMP and then transferred to the acceptor end of tRNA(Pro). As ProRS can inadvertently accommodate and process non-cognate amino acids such as alanine and cysteine, to avoid such errors it has two additional distinct editing activities against alanine. One activity is designated as 'pretransfer' editing and involves the tRNA(Pro)-independent hydrolysis of activated Ala-AMP. The other activity is designated 'posttransfer' editing and involves deacylation of mischarged Ala-tRNA(Pro). The misacylated Cys-tRNA(Pro) is not edited by ProRS. In Shewanella putrefaciens (strain CN-32 / ATCC BAA-453), this protein is Proline--tRNA ligase.